The chain runs to 129 residues: Small ribosomal subunit protein uS11 (129 aa).

This sequence belongs to the universal ribosomal protein uS11 family. As to quaternary structure, part of the 30S ribosomal subunit. Interacts with proteins S7 and S18. Binds to IF-3.

Located on the platform of the 30S subunit, it bridges several disparate RNA helices of the 16S rRNA. Forms part of the Shine-Dalgarno cleft in the 70S ribosome. The chain is Small ribosomal subunit protein uS11 from Listeria innocua serovar 6a (strain ATCC BAA-680 / CLIP 11262).